The primary structure comprises 371 residues: Peptide chain release factor 2 (371 aa).

Q251 carries the N5-methylglutamine modification.

This sequence belongs to the prokaryotic/mitochondrial release factor family. Post-translationally, methylated by PrmC. Methylation increases the termination efficiency of RF2.

It is found in the cytoplasm. Functionally, peptide chain release factor 2 directs the termination of translation in response to the peptide chain termination codons UGA and UAA. In Arthrobacter sp. (strain FB24), this protein is Peptide chain release factor 2.